The following is an 807-amino-acid chain: Glycerol-3-phosphate acyltransferase (807 aa).

The short motif at 308-313 is the HXXXXD motif element; that stretch reads CHRSHM.

This sequence belongs to the GPAT/DAPAT family.

The protein localises to the cell inner membrane. The catalysed reaction is sn-glycerol 3-phosphate + an acyl-CoA = a 1-acyl-sn-glycero-3-phosphate + CoA. It participates in phospholipid metabolism; CDP-diacylglycerol biosynthesis; CDP-diacylglycerol from sn-glycerol 3-phosphate: step 1/3. The sequence is that of Glycerol-3-phosphate acyltransferase from Shewanella putrefaciens (strain CN-32 / ATCC BAA-453).